The following is a 350-amino-acid chain: Phosphatidylinositol transfer protein PDR17 (350 aa).

The CRAL-TRIO domain occupies 139–297 (KVAVENETGK…LYNGLLDFKY (159 aa)).

As to quaternary structure, interacts with phosphatidylserine decarboxylase PSD2. Also interacts with PBI1.

It localises to the cytoplasm. The protein localises to the microsome. The enzyme catalyses a 1,2-diacyl-sn-glycero-3-phospho-(1D-myo-inositol)(in) = a 1,2-diacyl-sn-glycero-3-phospho-(1D-myo-inositol)(out). In terms of biological role, has phosphatidylinositol transfer activity. Involved in the regulation of the phospholipid composition of plasma- and endomembranes. Altering plasma membrane composition may provide a possible mechanism for multidrug resistance. Contributes to efficient phospholipase D1 activation and phospholipase B1 inhibition in the regulation of phospholipid turnover. Forms a complex with phosphatidylserine decarboxylase PSD2 that seems essential for maintenance of vacuolar phosphatidylethanolamine (PE) levels. Allows interorganelle phosphatidylserine (PtdSer) transport via a process that involves the acceptor membrane complex PDR17-PDS2 that binds to PBI1 which in turn ligates to SCS2 and phosphatidic acid present in the donor membrane, forming a zone of apposition that facilitates PtdSer transfer. The chain is Phosphatidylinositol transfer protein PDR17 from Saccharomyces cerevisiae (strain ATCC 204508 / S288c) (Baker's yeast).